The following is a 594-amino-acid chain: Aspartate--tRNA(Asp/Asn) ligase (594 aa).

E175 serves as a coordination point for L-aspartate. Residues 199–202 (QQFK) form an aspartate region. R221 and H455 together coordinate L-aspartate. 221–223 (RDE) lines the ATP pocket. E488 is an ATP binding site. R495 is an L-aspartate binding site. Residue 540–543 (GIDR) coordinates ATP.

It belongs to the class-II aminoacyl-tRNA synthetase family. Type 1 subfamily. Homodimer.

The protein localises to the cytoplasm. It carries out the reaction tRNA(Asx) + L-aspartate + ATP = L-aspartyl-tRNA(Asx) + AMP + diphosphate. Its function is as follows. Aspartyl-tRNA synthetase with relaxed tRNA specificity since it is able to aspartylate not only its cognate tRNA(Asp) but also tRNA(Asn). Reaction proceeds in two steps: L-aspartate is first activated by ATP to form Asp-AMP and then transferred to the acceptor end of tRNA(Asp/Asn). The chain is Aspartate--tRNA(Asp/Asn) ligase from Ruegeria sp. (strain TM1040) (Silicibacter sp.).